Reading from the N-terminus, the 562-residue chain is Oxygen-dependent choline dehydrogenase (562 aa).

Position 4 to 33 (4 to 33 (DYIIIGAGSAGNVLATRLTEDPNTTVLLLE)) interacts with FAD. Residue histidine 473 is the Proton acceptor of the active site.

It belongs to the GMC oxidoreductase family. Requires FAD as cofactor.

It carries out the reaction choline + A = betaine aldehyde + AH2. It catalyses the reaction betaine aldehyde + NAD(+) + H2O = glycine betaine + NADH + 2 H(+). The protein operates within amine and polyamine biosynthesis; betaine biosynthesis via choline pathway; betaine aldehyde from choline (cytochrome c reductase route): step 1/1. Functionally, involved in the biosynthesis of the osmoprotectant glycine betaine. Catalyzes the oxidation of choline to betaine aldehyde and betaine aldehyde to glycine betaine at the same rate. This chain is Oxygen-dependent choline dehydrogenase, found in Escherichia coli (strain SMS-3-5 / SECEC).